Consider the following 618-residue polypeptide: Manganese lipoxygenase (618 aa).

An N-terminal signal peptide occupies residues 1-16; it reads MRSRILAIVFAARHVA. Residues 36–45 show a composition bias toward low complexity; the sequence is SSTTVLPSPT. A disordered region spans residues 36-58; that stretch reads SSTTVLPSPTQYTLPNNDPNQGA. Residues 46–58 are compositionally biased toward polar residues; sequence QYTLPNNDPNQGA. Residues 47 to 617 enclose the Lipoxygenase domain; the sequence is YTLPNNDPNQ…NPAVNPFFLS (571 aa). N60, N91, N106, N116, and N157 each carry an N-linked (GlcNAc...) asparagine glycan. Residues H290, H294, H478, and N482 each coordinate Mn(2+). N513 carries N-linked (GlcNAc...) asparagine glycosylation. Residue V618 coordinates Mn(2+).

This sequence belongs to the lipoxygenase family. Mn(2+) serves as cofactor. Post-translationally, N- and O-glycosylated.

It localises to the secreted. The enzyme catalyses (9Z,12Z)-octadecadienoate + O2 = (11S)-hydroperoxy-(9Z,12Z)-octadecadienoate. It carries out the reaction (9Z,12Z)-octadecadienoate + O2 = (13R)-hydroperoxy-(9Z,11E)-octadecadienoate. It catalyses the reaction (9Z,12Z,15Z)-octadecatrienoate + O2 = (11S)-hydroperoxy-(9Z,12Z,15Z)-octadecatrienoate. The catalysed reaction is (9Z,12Z,15Z)-octadecatrienoate + O2 = (13R)-hydroperoxy-(9Z,11E,15Z)-octadecatrienoate. Functionally, lipoxygenase that metabolizes linoleic and alpha-linolenic acids to 11S- and 13R-hydroperoxy fatty acids. At the end of lipoxygenation, the intermediate product 11S-HPODE from linoleic acid is then transformed into 13R-HPODE as the final product. It also acts on alpha-linolenic acid producing 11S-HPOTrE and 13R-HPOTrE with subsequent transformation of 11S-HPOTrE to 13R-HPOTrE as the final product. Gamma-linolenic acid is a poor substrate. Oleate and arachidonate are not substrates. This chain is Manganese lipoxygenase, found in Gaeumannomyces tritici (Wheat and barley take-all root rot fungus).